Consider the following 1039-residue polypeptide: Antigenic heat-stable 120 kDa protein (1039 aa).

Disordered stretches follow at residues 1–115, 408–438, and 1020–1039; these read MSKD…TSDP, SSIETPTTTQVPPITPANQPLQPETSQMPQP, and QSENLNKSTPIKRESSFPPR. Residues 31 to 44 show a composition bias toward polar residues; sequence PISSTANKDGNPDT. Basic and acidic residues predominate over residues 54-69; sequence EYTEEQKQKLEQEQKE. Low complexity predominate over residues 85 to 114; it reads FSFTPASSTQSTPSISSLSGGISSDSQTSD. Polar residues predominate over residues 424-438; that stretch reads ANQPLQPETSQMPQP. Residues 1030–1039 show a composition bias toward basic and acidic residues; the sequence is IKRESSFPPR.

The protein localises to the cytoplasm. This chain is Antigenic heat-stable 120 kDa protein (sca4), found in Rickettsia felis (strain ATCC VR-1525 / URRWXCal2) (Rickettsia azadi).